Reading from the N-terminus, the 147-residue chain is MMQICDSYNQKNSLFNAMNRFIGAVNNMDQTVMVPSLLRDVPLDQEEEKEVTSFQDGDMYGSYVLLKSIRNDIEWGVLQAEERRKEKHGVTTTSLEVSRIEPNDKDLEKLFHYHLSGLHTVLAKLTRKANTLTNRYKQEIGIGGCGN.

Belongs to the SPOT14 family.

Its subcellular location is the nucleus. The protein localises to the cytoplasm. It is found in the cytoskeleton. Its function is as follows. Involved in stabilization of microtubules. May play a role in the regulation of lipogenesis. This is Mid1-interacting protein 1-B from Danio rerio (Zebrafish).